The following is a 417-amino-acid chain: MLEQMGIAAKQASYKLAQLSSREKNRVLEKIADELEAQSEIILNANAQDVADARANGLSEAMLDRLALTPARLKGIADDVRQVCNLADPVGQVIDGGVLDSGLRLERRRVPLGVIGVIYEARPNVTVDVASLCLKTGNAVILRGGKETCRTNAATVAVIQDALKSCGLPAGAVQAIDNPDRALVSEMLRMDKYIDMLIPRGGAGLHKLCREQSTIPVITGGIGVCHIYVDESVEIAEALKVIVNAKTQRPSTCNTVETLLVNKNIADSFLPALSKQMAESGVTLHADAAALAQLQAGPAKVVAVKAEEYDDEFLSLDLNVKIVSDLDDAIAHIREHGTQHSDAILTRDMRNAQRFVNEVDSSAVYVNASTRFTDGGQFGLGAEVAVSTQKLHARGPMGLEALTTYKWIGIGDYTIRA.

The protein belongs to the gamma-glutamyl phosphate reductase family.

The protein localises to the cytoplasm. It carries out the reaction L-glutamate 5-semialdehyde + phosphate + NADP(+) = L-glutamyl 5-phosphate + NADPH + H(+). The protein operates within amino-acid biosynthesis; L-proline biosynthesis; L-glutamate 5-semialdehyde from L-glutamate: step 2/2. Its function is as follows. Catalyzes the NADPH-dependent reduction of L-glutamate 5-phosphate into L-glutamate 5-semialdehyde and phosphate. The product spontaneously undergoes cyclization to form 1-pyrroline-5-carboxylate. This chain is Gamma-glutamyl phosphate reductase, found in Escherichia coli (strain K12 / MC4100 / BW2952).